The sequence spans 742 residues: Zinc finger protein 700 (742 aa).

The tract at residues 1-20 is disordered; sequence MPCCSHRSCREDPGTSESRE. Over residues 8-20 the composition is skewed to basic and acidic residues; it reads SCREDPGTSESRE. The KRAB domain maps to 24-104; it reads VAFEDVAVNF…KEDSHCGETF (81 aa). 9 consecutive C2H2-type zinc fingers follow at residues 194–216, 222–244, 250–272, 278–300, 306–328, 362–384, 390–412, 418–440, and 446–468; these read YACK…MVMH, YKCK…ERTH, YECK…ERTH, YECS…ERSH, YQCK…ERTH, YKCK…EKTH, YKCK…ERIH, YECK…GGTH, and YECK…GRTH. The C2H2-type 10; degenerate zinc-finger motif lies at 474–502; it reads YECKECGKAFRYVKHLQIHERTEKHIRMP. 8 consecutive C2H2-type zinc fingers follow at residues 508-530, 536-558, 564-586, 592-614, 620-642, 648-670, 676-698, and 704-726; these read YKCS…EKTH, YECN…ERTH, YECK…ERTH, YECK…GRTH, YECK…ERKH, and YECK…ARTH.

It belongs to the krueppel C2H2-type zinc-finger protein family.

It localises to the nucleus. Functionally, may be involved in transcriptional regulation. This is Zinc finger protein 700 (ZNF700) from Homo sapiens (Human).